We begin with the raw amino-acid sequence, 596 residues long: Aspartate--tRNA(Asp/Asn) ligase (596 aa).

Glu172 contributes to the L-aspartate binding site. The segment at 196–199 (QLFK) is aspartate. Arg218 contacts L-aspartate. ATP is bound by residues 218 to 220 (RDE) and Gln227. His450 is an L-aspartate binding site. Glu484 provides a ligand contact to ATP. Arg491 provides a ligand contact to L-aspartate. 536 to 539 (GLDR) contacts ATP.

The protein belongs to the class-II aminoacyl-tRNA synthetase family. Type 1 subfamily. Homodimer.

It is found in the cytoplasm. It carries out the reaction tRNA(Asx) + L-aspartate + ATP = L-aspartyl-tRNA(Asx) + AMP + diphosphate. In terms of biological role, aspartyl-tRNA synthetase with relaxed tRNA specificity since it is able to aspartylate not only its cognate tRNA(Asp) but also tRNA(Asn). Reaction proceeds in two steps: L-aspartate is first activated by ATP to form Asp-AMP and then transferred to the acceptor end of tRNA(Asp/Asn). This chain is Aspartate--tRNA(Asp/Asn) ligase, found in Acidithiobacillus ferrooxidans (strain ATCC 23270 / DSM 14882 / CIP 104768 / NCIMB 8455) (Ferrobacillus ferrooxidans (strain ATCC 23270)).